The sequence spans 725 residues: Phosphoribosylformylglycinamidine synthase subunit PurL (725 aa).

Residue His-42 is part of the active site. Residues Tyr-45 and Lys-84 each coordinate ATP. Mg(2+) is bound at residue Glu-86. Residues 87–90 (SHNH) and Arg-109 each bind substrate. His-88 acts as the Proton acceptor in catalysis. Asp-110 serves as a coordination point for Mg(2+). Residue Gln-237 participates in substrate binding. Asp-265 is a Mg(2+) binding site. Residue 309 to 311 (ESQ) participates in substrate binding. Positions 491 and 528 each coordinate ATP. Asn-529 is a Mg(2+) binding site. Ser-531 serves as a coordination point for substrate.

This sequence belongs to the FGAMS family. In terms of assembly, monomer. Part of the FGAM synthase complex composed of 1 PurL, 1 PurQ and 2 PurS subunits.

The protein resides in the cytoplasm. It catalyses the reaction N(2)-formyl-N(1)-(5-phospho-beta-D-ribosyl)glycinamide + L-glutamine + ATP + H2O = 2-formamido-N(1)-(5-O-phospho-beta-D-ribosyl)acetamidine + L-glutamate + ADP + phosphate + H(+). It participates in purine metabolism; IMP biosynthesis via de novo pathway; 5-amino-1-(5-phospho-D-ribosyl)imidazole from N(2)-formyl-N(1)-(5-phospho-D-ribosyl)glycinamide: step 1/2. Functionally, part of the phosphoribosylformylglycinamidine synthase complex involved in the purines biosynthetic pathway. Catalyzes the ATP-dependent conversion of formylglycinamide ribonucleotide (FGAR) and glutamine to yield formylglycinamidine ribonucleotide (FGAM) and glutamate. The FGAM synthase complex is composed of three subunits. PurQ produces an ammonia molecule by converting glutamine to glutamate. PurL transfers the ammonia molecule to FGAR to form FGAM in an ATP-dependent manner. PurS interacts with PurQ and PurL and is thought to assist in the transfer of the ammonia molecule from PurQ to PurL. This is Phosphoribosylformylglycinamidine synthase subunit PurL from Campylobacter lari (strain RM2100 / D67 / ATCC BAA-1060).